An 821-amino-acid polypeptide reads, in one-letter code: Glycogen phosphorylase (821 aa).

K667 bears the N6-(pyridoxal phosphate)lysine mark.

This sequence belongs to the glycogen phosphorylase family. Requires pyridoxal 5'-phosphate as cofactor.

The catalysed reaction is [(1-&gt;4)-alpha-D-glucosyl](n) + phosphate = [(1-&gt;4)-alpha-D-glucosyl](n-1) + alpha-D-glucose 1-phosphate. Functionally, phosphorylase is an important allosteric enzyme in carbohydrate metabolism. Enzymes from different sources differ in their regulatory mechanisms and in their natural substrates. However, all known phosphorylases share catalytic and structural properties. This chain is Glycogen phosphorylase (glgP), found in Haemophilus influenzae (strain ATCC 51907 / DSM 11121 / KW20 / Rd).